The primary structure comprises 374 residues: Anhydro-N-acetylmuramic acid kinase (374 aa).

Residue 12–19 (GTSLDGID) coordinates ATP.

The protein belongs to the anhydro-N-acetylmuramic acid kinase family.

It catalyses the reaction 1,6-anhydro-N-acetyl-beta-muramate + ATP + H2O = N-acetyl-D-muramate 6-phosphate + ADP + H(+). It participates in amino-sugar metabolism; 1,6-anhydro-N-acetylmuramate degradation. The protein operates within cell wall biogenesis; peptidoglycan recycling. In terms of biological role, catalyzes the specific phosphorylation of 1,6-anhydro-N-acetylmuramic acid (anhMurNAc) with the simultaneous cleavage of the 1,6-anhydro ring, generating MurNAc-6-P. Is required for the utilization of anhMurNAc either imported from the medium or derived from its own cell wall murein, and thus plays a role in cell wall recycling. The polypeptide is Anhydro-N-acetylmuramic acid kinase (Klebsiella pneumoniae subsp. pneumoniae (strain ATCC 700721 / MGH 78578)).